The sequence spans 86 residues: Small ribosomal subunit protein bS20 (86 aa).

A disordered region spans residues 1 to 22; sequence MANIKSQIKRIRTNERRRLRNQ. Residues 7 to 20 are compositionally biased toward basic residues; sequence QIKRIRTNERRRLR.

It belongs to the bacterial ribosomal protein bS20 family.

Binds directly to 16S ribosomal RNA. The protein is Small ribosomal subunit protein bS20 of Mycolicibacterium smegmatis (strain ATCC 700084 / mc(2)155) (Mycobacterium smegmatis).